Here is a 66-residue protein sequence, read N- to C-terminus: Beta-defensin 13 (66 aa).

Positions 1–22 (MRIFSLIVAGLVLLIQLHPAKG) are cleaved as a signal peptide. 3 cysteine pairs are disulfide-bonded: Cys-30-Cys-59, Cys-37-Cys-51, and Cys-41-Cys-60.

The protein belongs to the beta-defensin family.

The protein localises to the secreted. Its function is as follows. Has antibacterial activity. The sequence is that of Beta-defensin 13 (Defb13) from Rattus norvegicus (Rat).